A 206-amino-acid chain; its full sequence is Protein VEL1 (206 aa).

Positions 1 to 19 (MSFLSIFTFFSVLISVATT) are cleaved as a signal peptide. N-linked (GlcNAc...) asparagine glycans are attached at residues N26, N48, N91, N139, and N152.

It belongs to the VEL1 family. N-glycosylated.

Its subcellular location is the cytoplasm. The protein localises to the cytosol. This chain is Protein VEL1 (VEL1), found in Saccharomyces cerevisiae (strain ATCC 204508 / S288c) (Baker's yeast).